The primary structure comprises 120 residues: Ribonuclease P protein component (120 aa).

Belongs to the RnpA family. In terms of assembly, consists of a catalytic RNA component (M1 or rnpB) and a protein subunit.

It carries out the reaction Endonucleolytic cleavage of RNA, removing 5'-extranucleotides from tRNA precursor.. In terms of biological role, RNaseP catalyzes the removal of the 5'-leader sequence from pre-tRNA to produce the mature 5'-terminus. It can also cleave other RNA substrates such as 4.5S RNA. The protein component plays an auxiliary but essential role in vivo by binding to the 5'-leader sequence and broadening the substrate specificity of the ribozyme. The protein is Ribonuclease P protein component of Chlamydia trachomatis serovar A (strain ATCC VR-571B / DSM 19440 / HAR-13).